The primary structure comprises 491 residues: UDP-N-acetylmuramate--L-alanine ligase (491 aa).

Residue 126-132 participates in ATP binding; it reads GTHGKTT.

The protein belongs to the MurCDEF family.

The protein localises to the cytoplasm. It carries out the reaction UDP-N-acetyl-alpha-D-muramate + L-alanine + ATP = UDP-N-acetyl-alpha-D-muramoyl-L-alanine + ADP + phosphate + H(+). The protein operates within cell wall biogenesis; peptidoglycan biosynthesis. Its function is as follows. Cell wall formation. This chain is UDP-N-acetylmuramate--L-alanine ligase, found in Shigella boydii serotype 18 (strain CDC 3083-94 / BS512).